The following is a 656-amino-acid chain: Nexilin (656 aa).

Disordered stretches follow at residues 1–131, 165–198, and 215–284; these read MNDV…IEQD, RAAANRKDPEDLDREHRNGRVSQEEEKTRHEEEC, and TEAK…VFKE. Over residues 11-26 the composition is skewed to low complexity; it reads LLSSSKPVPKSYVPKL. Basic and acidic residues predominate over residues 27–78; sequence GKGDVKDKFEAMQRAREERNQRRSRDEKQRRKEQYIREREWNRRKQEIKDML. The residue at position 80 (Ser80) is a Phosphoserine. Composition is skewed to basic and acidic residues over residues 103 to 131, 169 to 198, and 216 to 269; these read GKFDEMEKHRQEEQRKRTEEERKRRIEQD, NRKDPEDLDREHRNGRVSQEEEKTRHEEEC, and EAKK…RNMV. A phosphoserine mark is found at Ser221, Ser330, Ser337, and Ser345. Thr350 carries the post-translational modification Phosphothreonine. Disordered stretches follow at residues 468–492 and 529–564; these read NFHEDDDVDVKPAKKSESPFTHKVN and AALQKKREDDEEEEGSIVNGSTTEDEEQTRSGAPWF. Phosphoserine occurs at positions 544 and 549. Residue Thr551 is modified to Phosphothreonine. Residues 562-650 form the Ig-like domain; sequence PWFKKPLRNT…GSAASTCILT (89 aa).

As to quaternary structure, interacts with F-actin. As to expression, expressed in brain, testis, spleen and fibroblasts (at protein level). Not detected in liver, kidney or epithelial cells (at protein level).

Its subcellular location is the cytoplasm. The protein localises to the cytoskeleton. The protein resides in the cell junction. It localises to the adherens junction. It is found in the myofibril. Its subcellular location is the sarcomere. The protein localises to the z line. Its function is as follows. Involved in regulating cell migration through association with the actin cytoskeleton. Has an essential role in the maintenance of Z line and sarcomere integrity. The sequence is that of Nexilin from Rattus norvegicus (Rat).